Consider the following 1089-residue polypeptide: Protein phosphatase 1 regulatory subunit 3A (1089 aa).

The tract at residues Lys32–Asp57 is disordered. A compositionally biased stretch (low complexity) spans Pro37–Ser51. 2 positions are modified to phosphoserine; by GSK3: Ser40 and Ser44. Phosphoserine occurs at positions 48 and 51. Thr58 is subject to Phosphothreonine. The PP1-binding motif motif lies at Arg64–Ser67. Ser67 bears the Phosphoserine; by PKA mark. The region spanning Glu123 to Val231 is the CBM21 domain. 3 disordered regions span residues Phe385 to Ser420, His479 to Asn501, and Pro566 to Ala649. Positions Ser581–Pro600 are enriched in polar residues. Basic and acidic residues predominate over residues Thr602–Ser614. Positions Asp615–Asn625 are enriched in polar residues. The residue at position 821 (Ser821) is a Phosphoserine. The disordered stretch occupies residues Ile949–Glu968. Over residues Gly953–Pro962 the composition is skewed to gly residues. The chain crosses the membrane as a helical span at residues Leu1047–Phe1067.

As to quaternary structure, interacts with PPP1CC catalytic subunit of PP1, and associates with glycogen. In terms of processing, phosphorylation at Ser-48 by ISPK stimulates the dephosphorylation of glycogen synthase and phosphorylase kinase. Skeletal muscle and heart.

The protein localises to the membrane. Seems to act as a glycogen-targeting subunit for PP1. PP1 is essential for cell division, and participates in the regulation of glycogen metabolism, muscle contractility and protein synthesis. Plays an important role in glycogen synthesis but is not essential for insulin activation of glycogen synthase. The protein is Protein phosphatase 1 regulatory subunit 3A (Ppp1r3a) of Mus musculus (Mouse).